Consider the following 256-residue polypeptide: Biosynthetic peptidoglycan transglycosylase (256 aa).

The helical transmembrane segment at 26–48 threads the bilayer; that stretch reads VARWLAYAGGVFAGAWLATQLYY.

Belongs to the glycosyltransferase 51 family.

It localises to the cell inner membrane. The catalysed reaction is [GlcNAc-(1-&gt;4)-Mur2Ac(oyl-L-Ala-gamma-D-Glu-L-Lys-D-Ala-D-Ala)](n)-di-trans,octa-cis-undecaprenyl diphosphate + beta-D-GlcNAc-(1-&gt;4)-Mur2Ac(oyl-L-Ala-gamma-D-Glu-L-Lys-D-Ala-D-Ala)-di-trans,octa-cis-undecaprenyl diphosphate = [GlcNAc-(1-&gt;4)-Mur2Ac(oyl-L-Ala-gamma-D-Glu-L-Lys-D-Ala-D-Ala)](n+1)-di-trans,octa-cis-undecaprenyl diphosphate + di-trans,octa-cis-undecaprenyl diphosphate + H(+). It participates in cell wall biogenesis; peptidoglycan biosynthesis. In terms of biological role, peptidoglycan polymerase that catalyzes glycan chain elongation from lipid-linked precursors. The polypeptide is Biosynthetic peptidoglycan transglycosylase (Burkholderia thailandensis (strain ATCC 700388 / DSM 13276 / CCUG 48851 / CIP 106301 / E264)).